Reading from the N-terminus, the 2062-residue chain is Ankyrin repeat domain-containing protein 12 (2062 aa).

Disordered stretches follow at residues 1-119 (MPKS…GNKK) and 145-188 (ARDN…GETP). The span at 9 to 20 (PIQSENSDSDSN) shows a compositional bias: polar residues. Basic and acidic residues-rich tracts occupy residues 41-57 (PKIE…EKSS) and 100-117 (YSEK…EAGN). Residues 145-172 (ARDNSPDSTPNHPSQTTPAQKKTPSSSS) show a composition bias toward polar residues. Ser-149 bears the Phosphoserine mark. A compositionally biased stretch (basic and acidic residues) spans 173–187 (RQKDKVNKRNERGET). ANK repeat units follow at residues 184 to 213 (RGET…NVNV), 217 to 246 (AGWT…DVNT), and 250 to 280 (DDDT…PFQA). Disordered stretches follow at residues 301–338 (KREV…TEKD), 409–501 (KSFK…TRIT), 538–577 (ISTG…MSLQ), 609–683 (QKDF…DSAK), 727–788 (EKNI…FTSL), 812–1073 (EKHI…LVND), 1097–1227 (KHKE…RPPV), and 1328–1350 (EESN…KPEV). The segment covering 306 to 318 (LSDDDESYTDSEE) has biased composition (acidic residues). 2 stretches are compositionally biased toward polar residues: residues 319–328 (AQSVNPSSVD) and 437–454 (KKIS…NSDM). Positions 455–467 (QTKKEYVVSGEHK) are enriched in basic and acidic residues. Residues 468–480 (QKGKVKRKLKNQN) are compositionally biased toward basic residues. Residues 481–498 (KNKENQELKQEKEGKENT) are compositionally biased toward basic and acidic residues. A Phosphoserine modification is found at Ser-543. Residues 565–575 (TCLSPGSSEMS) show a composition bias toward polar residues. Basic and acidic residues-rich tracts occupy residues 609–631 (QKDF…DHSP), 639–649 (TLKKMDKEGKT), 658–683 (KERE…DSAK), 727–784 (EKNI…KDSE), 812–969 (EKHI…DKES), 977–1037 (HIQE…KDKI), 1061–1072 (KDTRPKEKRLVN), and 1103–1157 (KQKE…KQPK). Position 630 is a phosphoserine (Ser-630). Ser-861 is modified (phosphoserine). The segment covering 1161–1189 (SNRSQSVDTKNVMTLGKSSFVSDNSLNRS) has biased composition (polar residues). Low complexity predominate over residues 1200–1213 (SSRSVSMISVASSE). Residues 1328–1344 (EESNQGSLLTVPGDTSP) show a composition bias toward polar residues. Ser-1401 bears the Phosphoserine mark. Disordered stretches follow at residues 1721–1744 (NAED…NTMA) and 1756–1795 (LLSE…VPQP). Polar residues predominate over residues 1729–1744 (NQIPQRMTRNKANTMA).

As to quaternary structure, interacts with the PAS region of the p160 coactivators.

The protein localises to the nucleus. Functionally, may recruit HDACs to the p160 coactivators/nuclear receptor complex to inhibit ligand-dependent transactivation. The polypeptide is Ankyrin repeat domain-containing protein 12 (ANKRD12) (Homo sapiens (Human)).